Reading from the N-terminus, the 176-residue chain is Viral interleukin-10 homolog (176 aa).

Residues Met-1–Pro-25 form the signal peptide. 2 cysteine pairs are disulfide-bonded: Cys-38–Cys-128 and Cys-82–Cys-133. Asn-152 carries N-linked (GlcNAc...) asparagine; by host glycosylation.

This sequence belongs to the IL-10 family. In terms of assembly, homodimer; disulfide-linked.

It is found in the secreted. Functionally, functional viral IL-10 homolog. Can bind to the human IL-10 receptor and compete with human IL-10 for binding sites. Requires both subunits of the human IL-10 receptor complex to induce signal transduction events and biological activities. IL-10 signaling pathway has several immunosuppressive activities that are exploited by the virus. Inhibits TLR-induced type I interferon production in host plasmacytoid dendritic cells. The chain is Viral interleukin-10 homolog (UL111A) from Homo sapiens (Human).